A 466-amino-acid polypeptide reads, in one-letter code: Ribulose bisphosphate carboxylase/oxygenase activase, chloroplastic (466 aa).

The N-terminal 48 residues, 1–48 (MAAAFSSTVGAPASTPTNFLGKKLKKQVTSAVNYHGKSSNINRFKVMA), are a transit peptide targeting the chloroplast. Residue 156–163 (GGKGQGKS) coordinates ATP. Positions 429–454 (QGAQQAGNLPVPEGCTDPVAKNFDPT) are disordered.

This sequence belongs to the RuBisCO activase family.

Its subcellular location is the plastid. It is found in the chloroplast stroma. In terms of biological role, activation of RuBisCO (ribulose-1,5-bisphosphate carboxylase/oxygenase; EC 4.1.1.39) involves the ATP-dependent carboxylation of the epsilon-amino group of lysine leading to a carbamate structure. This chain is Ribulose bisphosphate carboxylase/oxygenase activase, chloroplastic (RCA), found in Oryza sativa subsp. japonica (Rice).